Reading from the N-terminus, the 185-residue chain is Ribosome-recycling factor (185 aa).

Belongs to the RRF family.

The protein localises to the cytoplasm. Functionally, responsible for the release of ribosomes from messenger RNA at the termination of protein biosynthesis. May increase the efficiency of translation by recycling ribosomes from one round of translation to another. This Alteromonas mediterranea (strain DSM 17117 / CIP 110805 / LMG 28347 / Deep ecotype) protein is Ribosome-recycling factor.